The chain runs to 376 residues: Glycerol-3-phosphate acyltransferase 9 (376 aa).

At 1–78 (MSSTAGRLVT…SNPPEPWNWN (78 aa)) the chain is on the cytoplasmic side. S13 is subject to Phosphoserine. 3 consecutive transmembrane segments (helical) span residues 79–99 (IYLFPLYCFGVVVRYCILFPL), 102–122 (FTLAFGWIIFLSLFIPVNALL), and 135–155 (VLVEMICSFFVASWTGVVKYH). Topologically, residues 156 to 376 (GPRPSIRPKQ…ESILARLEEK (221 aa)) are cytoplasmic. The tract at residues 168-180 (VANHTSMIDFIVL) is catalytic. The HXXXXD motif motif lies at 171–176 (HTSMID). Sn-glycerol 3-phosphate is bound at residue 209 to 218 (GCIWFNRSEA). Positions 242–262 (IFPEGTCVNNNYTVMFKKGAF) are glycerol-3-phosphate binding. A catalytic region spans residues 266–275 (CTVCPIAIKY). An endoplasmic reticulum targeting region spans residues 369 to 373 (ILARL).

This sequence belongs to the 1-acyl-sn-glycerol-3-phosphate acyltransferase family. As to quaternary structure, self-interacts. Interacts with LPAT2 and LPCAT2. As to expression, up-regulated during embryogenesis. Expressed in seedlings, leaves, stems, roots, floral buds, flowers, pollen, and siliques at various developmental stages.

It is found in the endoplasmic reticulum membrane. It catalyses the reaction sn-glycerol 3-phosphate + an acyl-CoA = a 1-acyl-sn-glycero-3-phosphate + CoA. It functions in the pathway glycerolipid metabolism; triacylglycerol biosynthesis. Essential protein. Required for male and female gametophytes development. Exhibits sn-1 acyltransferase activity with high specificity for acyl-coenzyme A, thus triggering storage lipid biosynthesis and playing an important role in the Kennedy pathway of glycerolipid biosynthesis. Catalyzes triacylglycerol (TAG) accumulation involved in membrane lipid and oil biosynthesis, especially in seeds. Also contributes to the biosynthesis of both polar lipids and TAG in developing leaves, as well as lipid droplet production in developing pollen grains. Seems to not contribute to surface lipid biosynthesis (e.g. waxes and cutin). The protein is Glycerol-3-phosphate acyltransferase 9 of Arabidopsis thaliana (Mouse-ear cress).